We begin with the raw amino-acid sequence, 353 residues long: Thrombopoietin (353 aa).

The first 21 residues, 1–21 (MELTELLLVVMLLLTARLTLS), serve as a signal peptide directing secretion. O-linked (GalNAc...) serine glycosylation occurs at Ser22. Disulfide bonds link Cys28-Cys172 and Cys50-Cys106. O-linked (GalNAc...) threonine glycans are attached at residues Thr58, Thr131, Thr179, and Thr180. A glycan (O-linked (GalNAc...) serine) is linked at Ser184. 2 N-linked (GlcNAc...) (complex) asparagine glycosylation sites follow: Asn197 and Asn206. Residue Thr213 is glycosylated (O-linked (GalNAc...) threonine). N-linked (GlcNAc...) (complex) asparagine glycans are attached at residues Asn234 and Asn255. A disordered region spans residues 257–353 (TRGLFPGPSR…THSQNLSQEG (97 aa)). The O-linked (GalNAc...) serine glycan is linked to Ser265. A compositionally biased stretch (polar residues) spans 275–304 (SSGTSDTGSLPPNLQPGYSPSPTHPPTGQY). Pro residues predominate over residues 324-335 (LPDPSAPTPTPT). N-linked (GlcNAc...) asparagine glycans are attached at residues Asn340 and Asn348. The span at 343-353 (YTHSQNLSQEG) shows a compositional bias: polar residues.

Belongs to the EPO/TPO family. Interacts with MPL/TPOR.

The protein resides in the secreted. In terms of biological role, lineage-specific cytokine affecting the proliferation and maturation of megakaryocytes from their committed progenitor cells. It acts at a late stage of megakaryocyte development. It may be the major physiological regulator of circulating platelets. The sequence is that of Thrombopoietin (THPO) from Homo sapiens (Human).